The following is a 393-amino-acid chain: Phospholipase A1-II 1 (393 aa).

Positions 200 to 220 (QVLNEIKRLQDMYEHEETSIT) form a coiled coil. Ser-225 acts as the Acyl-ester intermediate in catalysis. Active-site charge relay system residues include Ser-225, Asp-284, and His-321.

This sequence belongs to the AB hydrolase superfamily. Lipase family.

It is found in the cytoplasm. In terms of biological role, acylhydrolase that catalyzes the hydrolysis of phospholipids at the sn-1 position. This Oryza sativa subsp. indica (Rice) protein is Phospholipase A1-II 1.